Reading from the N-terminus, the 336-residue chain is Dihydroorotate dehydrogenase (quinone) (336 aa).

FMN is bound by residues 62 to 66 (AGLDK) and threonine 86. Lysine 66 is a binding site for substrate. Residue 111–115 (NRMGF) participates in substrate binding. 2 residues coordinate FMN: asparagine 139 and asparagine 172. Asparagine 172 lines the substrate pocket. Catalysis depends on serine 175, which acts as the Nucleophile. Substrate is bound at residue asparagine 177. The FMN site is built by lysine 217 and threonine 245. Position 246 to 247 (246 to 247 (NT)) interacts with substrate. Residues glycine 268, glycine 297, and 318–319 (YS) each bind FMN.

Belongs to the dihydroorotate dehydrogenase family. Type 2 subfamily. In terms of assembly, monomer. The cofactor is FMN.

The protein resides in the cell membrane. The catalysed reaction is (S)-dihydroorotate + a quinone = orotate + a quinol. The protein operates within pyrimidine metabolism; UMP biosynthesis via de novo pathway; orotate from (S)-dihydroorotate (quinone route): step 1/1. Catalyzes the conversion of dihydroorotate to orotate with quinone as electron acceptor. The polypeptide is Dihydroorotate dehydrogenase (quinone) (Psychromonas ingrahamii (strain DSM 17664 / CCUG 51855 / 37)).